Reading from the N-terminus, the 445-residue chain is KIN17-like protein (445 aa).

The C2H2-type zinc finger occupies 26 to 50; sequence WYCQLCEKQCRDENGFKCHISSESH. 2 stretches are compositionally biased toward low complexity: residues 215 to 229 and 239 to 253; these read NTTT…TTTN and NDNN…DQTN. The interval 215 to 256 is disordered; the sequence is NTTTTTTNTTTTTTNKNIFDKLKTNDNNSSNNNYNDQTNPKP.

It belongs to the KIN17 family.

The sequence is that of KIN17-like protein from Dictyostelium discoideum (Social amoeba).